A 517-amino-acid chain; its full sequence is Phospholipase C C (517 aa).

A signal peptide (tat-type signal) is located at residues 1–39; the sequence is MVSQGAFAGMSRRAFLAKAAGAGAAAVLTDWAAPVIEKA.

It belongs to the bacterial phospholipase C family. Post-translationally, predicted to be exported by the Tat system. The position of the signal peptide cleavage has not been experimentally proven.

It localises to the secreted. Its subcellular location is the cell wall. It carries out the reaction a 1,2-diacyl-sn-glycero-3-phosphocholine + H2O = phosphocholine + a 1,2-diacyl-sn-glycerol + H(+). The catalysed reaction is 1,2-dihexadecanoyl-sn-glycero-3-phosphocholine + H2O = 1,2-dihexadecanoyl-sn-glycerol + phosphocholine + H(+). Its function is as follows. Involved in virulence. Induces cytotoxic effects on mouse macrophage cell lines, via direct or indirect enzymatic hydrolysis of cell membrane phospholipids. Hydrolyzes phosphatidylcholine. Does not have hemolytic activity. The sequence is that of Phospholipase C C from Mycobacterium tuberculosis (strain ATCC 25618 / H37Rv).